Here is a 351-residue protein sequence, read N- to C-terminus: Photosystem II D2 protein (351 aa).

A helical membrane pass occupies residues 39–59 (TAYLAIGGWLTGTTFVTSWYT). Residue His-116 coordinates chlorophyll a. A helical transmembrane segment spans residues 123 to 139 (GFMLRQFEIARLVGIRP). Residues Gln-128 and Asn-141 each coordinate pheophytin a. A helical membrane pass occupies residues 151-164 (VFVSVFLMYPLGQS). Position 196 (His-196) interacts with chlorophyll a. Residues 206 to 226 (GALLCAIHGATVENTLFEDGE) form a helical membrane-spanning segment. The a plastoquinone site is built by His-213 and Phe-260. His-213 provides a ligand contact to Fe cation. Fe cation is bound at residue His-267. Residues 277 to 293 (GLWTSSIGIIGLALNLR) traverse the membrane as a helical segment.

The protein belongs to the reaction center PufL/M/PsbA/D family. PSII is composed of 1 copy each of membrane proteins PsbA, PsbB, PsbC, PsbD, PsbE, PsbF, PsbH, PsbI, PsbJ, PsbK, PsbL, PsbM, PsbT, PsbX, PsbY, PsbZ, Psb30/Ycf12, peripheral proteins PsbO, CyanoQ (PsbQ), PsbU, PsbV and a large number of cofactors. It forms dimeric complexes. The D1/D2 heterodimer binds P680, chlorophylls that are the primary electron donor of PSII, and subsequent electron acceptors. It shares a non-heme iron and each subunit binds pheophytin, quinone, additional chlorophylls, carotenoids and lipids. There is also a Cl(-1) ion associated with D1 and D2, which is required for oxygen evolution. The PSII complex binds additional chlorophylls, carotenoids and specific lipids. is required as a cofactor.

It localises to the cellular thylakoid membrane. The catalysed reaction is 2 a plastoquinone + 4 hnu + 2 H2O = 2 a plastoquinol + O2. In terms of biological role, photosystem II (PSII) is a light-driven water:plastoquinone oxidoreductase that uses light energy to abstract electrons from H(2)O, generating O(2) and a proton gradient subsequently used for ATP formation. It consists of a core antenna complex that captures photons, and an electron transfer chain that converts photonic excitation into a charge separation. The D1/D2 (PsbA/PsbD) reaction center heterodimer binds P680, the primary electron donor of PSII as well as several subsequent electron acceptors. D2 is needed for assembly of a stable PSII complex. This is Photosystem II D2 protein from Parasynechococcus marenigrum (strain WH8102).